A 133-amino-acid polypeptide reads, in one-letter code: Nucleoside diphosphate kinase (133 aa).

Residues K9, F57, R85, T91, R102, and N112 each contribute to the ATP site. The active-site Pros-phosphohistidine intermediate is H115.

This sequence belongs to the NDK family. In terms of assembly, homotetramer. The cofactor is Mg(2+).

The protein resides in the cytoplasm. It catalyses the reaction a 2'-deoxyribonucleoside 5'-diphosphate + ATP = a 2'-deoxyribonucleoside 5'-triphosphate + ADP. The catalysed reaction is a ribonucleoside 5'-diphosphate + ATP = a ribonucleoside 5'-triphosphate + ADP. Its function is as follows. Major role in the synthesis of nucleoside triphosphates other than ATP. The ATP gamma phosphate is transferred to the NDP beta phosphate via a ping-pong mechanism, using a phosphorylated active-site intermediate. This Rubrobacter xylanophilus (strain DSM 9941 / JCM 11954 / NBRC 16129 / PRD-1) protein is Nucleoside diphosphate kinase.